We begin with the raw amino-acid sequence, 169 residues long: ATP synthase subunit b, sodium ion specific (169 aa).

A helical transmembrane segment spans residues 5 to 27; the sequence is SFISLDWGVVFQIVNTIVMYLIL.

It belongs to the ATPase B chain family. F-type ATPases have 2 components, F(1) - the catalytic core - and F(0) - the membrane proton channel. F(1) has five subunits: alpha(3), beta(3), gamma(1), delta(1), epsilon(1). F(0) has three main subunits: a(1), b(2) and c(10-14). The alpha and beta chains form an alternating ring which encloses part of the gamma chain. F(1) is attached to F(0) by a central stalk formed by the gamma and epsilon chains, while a peripheral stalk is formed by the delta and b chains.

It is found in the cell membrane. Its function is as follows. F(1)F(0) ATP synthase produces ATP from ADP in the presence of a proton or sodium gradient. F-type ATPases consist of two structural domains, F(1) containing the extramembraneous catalytic core and F(0) containing the membrane proton channel, linked together by a central stalk and a peripheral stalk. During catalysis, ATP synthesis in the catalytic domain of F(1) is coupled via a rotary mechanism of the central stalk subunits to proton translocation. In terms of biological role, component of the F(0) channel, it forms part of the peripheral stalk, linking F(1) to F(0). Functionally, in this organism this enzyme may function as an ATP-driven Na(+) ion pump to generate a Na(+) ion electrochemical gradient rather than as an ATP synthase. The chain is ATP synthase subunit b, sodium ion specific (atpF) from Clostridium paradoxum.